Here is a 423-residue protein sequence, read N- to C-terminus: MRSLGANMAAALRAAGVLLRDPLVSSSWRVYQPWRWKSVAAAAAATTETAQHAQGAKPQVQPQKRKPKTGILMLNMGGPETLGDVHDFLLRLFLDRDLMTLPIQNKLAPFIAKRRTPKIQEQYRRIGGGSPIKIWTSKQGEGMVKLLDELSPNTAPHKYYIGFRYVHPLTEEAIEEMERDGLERAIAFTQYPQYSCSTTGSSLNAIYRYYNQVGRKPTMKWSTIDRWPTHHLLIQCFADHILKELDHFPLEKRSEVVILFSAHSLPMSVVNRGDPYPQEVSATVQKVMERLEYCNPYRLVWQSKVGPMPWLGPQTDESIKGLCERGRKNILLVPIAFTSDHIETLYELDIEYSQVLAKECGVENIRRAESLNGNPLFSKALADLVHSHIQSNELCSKQLTLSCPLCVNPVCRETKSFFTSQQL.

The transit peptide at 1–54 (MRSLGANMAAALRAAGVLLRDPLVSSSWRVYQPWRWKSVAAAAAATTETAQHAQ) directs the protein to the mitochondrion. An N6-acetyllysine modification is found at Lys-57. Protoporphyrin IX is bound by residues Arg-115, Tyr-123, and Ser-130. Residue Lys-138 is modified to N6-succinyllysine. Cys-196 is a [2Fe-2S] cluster binding site. Active-site residues include His-230 and Asp-383. Residues Cys-403, Cys-406, and Cys-411 each coordinate [2Fe-2S] cluster. N6-acetyllysine; alternate is present on Lys-415. Lys-415 carries the post-translational modification N6-succinyllysine; alternate.

Belongs to the ferrochelatase family. As to quaternary structure, homodimer. Homotetramer. Interaction with PGRMC1; the interaction results in decreased FECH activity. Interacts with ABCB10 and SLC25A37; this interaction forms an oligomeric complex. Forms a complex with ABCB7 and ABCB10, where a dimeric FECH bridges ABCB7 and ABCB10 homodimers; this complex may be required for cellular iron homeostasis, mitochondrial function and heme biosynthesis. Interacts with ABCB7 and ABCB10. Requires [2Fe-2S] cluster as cofactor.

The protein resides in the mitochondrion inner membrane. It catalyses the reaction heme b + 2 H(+) = protoporphyrin IX + Fe(2+). Its pathway is porphyrin-containing compound metabolism; protoheme biosynthesis; protoheme from protoporphyrin-IX: step 1/1. Catalyzes the ferrous insertion into protoporphyrin IX and participates in the terminal step in the heme biosynthetic pathway. This Pan troglodytes (Chimpanzee) protein is Ferrochelatase, mitochondrial.